Here is a 322-residue protein sequence, read N- to C-terminus: uncharacterized protein (322 aa).

This is an uncharacterized protein from Acanthamoeba polyphaga mimivirus (APMV).